A 518-amino-acid polypeptide reads, in one-letter code: MAIKAEEISALIKEQIENYQQQLAVEEVGTVTYVGDGIARAHGLENAMSGELVEFSNGSYGMAQNLETNDVGIIILGDFETIREGDKVQRTGKIMEVPVGEALIGRVVNPLGQPLDGLGEIKTDKTRPVEATAPGVMQRQSVAEPMQTGLKAIDALVPIGRGQRELVIGDRKTGKTSIAIDTIINQKGQDVICIYVAIGQKESTVRNQVETLRKFGALDYTIVVTAGASQPAPLLYIAPYAGTAMGEEFMYNGKHVLIIFDDLSKQAVAYRELSLLLRRPPGREAYPGDVFYLHSRLLERAAKLSDELGGGSMTALPFVETQAGDISAYIPTNVISITDGQIFLESDLFYAGTRPAVDAGLSVSRVGGSAQIKAMKKVAGTLRLDLASYRELEAFTQFGSDLDAATQAKLNRGRRTVEILKQKLHAPLPVEKQVLILYALTHGFLDSVSVDKILHFEQDLFDYFDGKHADLLETIRTTKDLPDTDALDAAITEFSEMFAAANNSGDSAKEALEKIDNA.

An ATP-binding site is contributed by 169-176; that stretch reads GDRKTGKT.

Belongs to the ATPase alpha/beta chains family. As to quaternary structure, F-type ATPases have 2 components, CF(1) - the catalytic core - and CF(0) - the membrane proton channel. CF(1) has five subunits: alpha(3), beta(3), gamma(1), delta(1), epsilon(1). CF(0) has three main subunits: a(1), b(2) and c(9-12). The alpha and beta chains form an alternating ring which encloses part of the gamma chain. CF(1) is attached to CF(0) by a central stalk formed by the gamma and epsilon chains, while a peripheral stalk is formed by the delta and b chains.

The protein localises to the cell membrane. It carries out the reaction ATP + H2O + 4 H(+)(in) = ADP + phosphate + 5 H(+)(out). In terms of biological role, produces ATP from ADP in the presence of a proton gradient across the membrane. The alpha chain is a regulatory subunit. The polypeptide is ATP synthase subunit alpha (Enterococcus faecalis (strain ATCC 700802 / V583)).